The chain runs to 309 residues: Homoserine O-acetyltransferase (309 aa).

Cys-142 functions as the Acyl-thioester intermediate in the catalytic mechanism. Residues Lys-163 and Ser-192 each coordinate substrate. The active-site Proton acceptor is the His-235. The active site involves Glu-237. Arg-249 lines the substrate pocket.

The protein belongs to the MetA family.

It is found in the cytoplasm. It carries out the reaction L-homoserine + acetyl-CoA = O-acetyl-L-homoserine + CoA. It participates in amino-acid biosynthesis; L-methionine biosynthesis via de novo pathway; O-acetyl-L-homoserine from L-homoserine: step 1/1. Transfers an acetyl group from acetyl-CoA to L-homoserine, forming acetyl-L-homoserine. The chain is Homoserine O-acetyltransferase from Petrotoga mobilis (strain DSM 10674 / SJ95).